The primary structure comprises 323 residues: Ubiquinone biosynthesis protein COQ4, mitochondrial (323 aa).

Residues His209, Asp210, His213, and Glu225 each contribute to the Zn(2+) site.

It belongs to the COQ4 family. Component of a multi-subunit COQ enzyme complex, composed of at least COQ3, COQ4, COQ5, COQ6, COQ7 and COQ9. It depends on Zn(2+) as a cofactor.

Its subcellular location is the mitochondrion inner membrane. The catalysed reaction is a 4-hydroxy-3-methoxy-5-(all-trans-polyprenyl)benzoate + H(+) = a 2-methoxy-6-(all-trans-polyprenyl)phenol + CO2. It functions in the pathway cofactor biosynthesis; ubiquinone biosynthesis. Functionally, lyase that catalyzes the C1-decarboxylation of 4-hydroxy-3-methoxy-5-(all-trans-polyprenyl)benzoic acid into 2-methoxy-6-(all-trans-polyprenyl)phenol during ubiquinone biosynthesis. The chain is Ubiquinone biosynthesis protein COQ4, mitochondrial from Debaryomyces hansenii (strain ATCC 36239 / CBS 767 / BCRC 21394 / JCM 1990 / NBRC 0083 / IGC 2968) (Yeast).